Here is a 295-residue protein sequence, read N- to C-terminus: Phosphatidylserine decarboxylase proenzyme (295 aa).

Active-site charge relay system; for autoendoproteolytic cleavage activity residues include D113, H169, and S256. Catalysis depends on S256, which acts as the Schiff-base intermediate with substrate; via pyruvic acid; for decarboxylase activity. S256 carries the pyruvic acid (Ser); by autocatalysis modification.

It belongs to the phosphatidylserine decarboxylase family. PSD-B subfamily. Prokaryotic type II sub-subfamily. Heterodimer of a large membrane-associated beta subunit and a small pyruvoyl-containing alpha subunit. The cofactor is pyruvate. Is synthesized initially as an inactive proenzyme. Formation of the active enzyme involves a self-maturation process in which the active site pyruvoyl group is generated from an internal serine residue via an autocatalytic post-translational modification. Two non-identical subunits are generated from the proenzyme in this reaction, and the pyruvate is formed at the N-terminus of the alpha chain, which is derived from the carboxyl end of the proenzyme. The autoendoproteolytic cleavage occurs by a canonical serine protease mechanism, in which the side chain hydroxyl group of the serine supplies its oxygen atom to form the C-terminus of the beta chain, while the remainder of the serine residue undergoes an oxidative deamination to produce ammonia and the pyruvoyl prosthetic group on the alpha chain. During this reaction, the Ser that is part of the protease active site of the proenzyme becomes the pyruvoyl prosthetic group, which constitutes an essential element of the active site of the mature decarboxylase.

The protein localises to the cell membrane. The catalysed reaction is a 1,2-diacyl-sn-glycero-3-phospho-L-serine + H(+) = a 1,2-diacyl-sn-glycero-3-phosphoethanolamine + CO2. Its pathway is phospholipid metabolism; phosphatidylethanolamine biosynthesis; phosphatidylethanolamine from CDP-diacylglycerol: step 2/2. Catalyzes the formation of phosphatidylethanolamine (PtdEtn) from phosphatidylserine (PtdSer). The polypeptide is Phosphatidylserine decarboxylase proenzyme (Clostridium novyi (strain NT)).